Here is a 412-residue protein sequence, read N- to C-terminus: NADH-quinone oxidoreductase subunit D (412 aa).

It belongs to the complex I 49 kDa subunit family. NDH-1 is composed of 14 different subunits. Subunits NuoB, C, D, E, F, and G constitute the peripheral sector of the complex.

It is found in the cell inner membrane. It carries out the reaction a quinone + NADH + 5 H(+)(in) = a quinol + NAD(+) + 4 H(+)(out). Its function is as follows. NDH-1 shuttles electrons from NADH, via FMN and iron-sulfur (Fe-S) centers, to quinones in the respiratory chain. The immediate electron acceptor for the enzyme in this species is believed to be ubiquinone. Couples the redox reaction to proton translocation (for every two electrons transferred, four hydrogen ions are translocated across the cytoplasmic membrane), and thus conserves the redox energy in a proton gradient. The chain is NADH-quinone oxidoreductase subunit D from Sulfurimonas denitrificans (strain ATCC 33889 / DSM 1251) (Thiomicrospira denitrificans (strain ATCC 33889 / DSM 1251)).